Here is a 244-residue protein sequence, read N- to C-terminus: DNA repair protein RecO (244 aa).

It belongs to the RecO family.

Its function is as follows. Involved in DNA repair and RecF pathway recombination. The polypeptide is DNA repair protein RecO (Koribacter versatilis (strain Ellin345)).